A 224-amino-acid chain; its full sequence is Ribose-5-phosphate isomerase A (224 aa).

Substrate is bound by residues Thr26 to Thr29, Asp81 to Asp84, and Lys94 to Gly97. The active-site Proton acceptor is the Glu103. Residue Lys121 coordinates substrate.

The protein belongs to the ribose 5-phosphate isomerase family. In terms of assembly, homodimer.

The catalysed reaction is aldehydo-D-ribose 5-phosphate = D-ribulose 5-phosphate. Its pathway is carbohydrate degradation; pentose phosphate pathway; D-ribose 5-phosphate from D-ribulose 5-phosphate (non-oxidative stage): step 1/1. Its function is as follows. Catalyzes the reversible conversion of ribose-5-phosphate to ribulose 5-phosphate. The protein is Ribose-5-phosphate isomerase A of Listeria monocytogenes serotype 4b (strain CLIP80459).